The primary structure comprises 106 residues: Large ribosomal subunit protein eL42 (106 aa).

This sequence belongs to the eukaryotic ribosomal protein eL42 family. In terms of assembly, component of the large ribosomal subunit.

The protein resides in the cytoplasm. Component of the large ribosomal subunit. The ribosome is a large ribonucleoprotein complex responsible for the synthesis of proteins in the cell. This is Large ribosomal subunit protein eL42 (RPL36A) from Papio anubis (Olive baboon).